Here is a 206-residue protein sequence, read N- to C-terminus: MTVSVDDLCVTRGGVPILSGVSFDLAEGAALILQGPNGSGKTTLLRTLAGLQPPLAGQISGTEDRIAYAAHSDGLKSMLSVAENLRFWAAVFGRSDIAPALQAFDLHDLADRLAGTLSAGQKRRLGLARLLVTGRPVWMLDEPTVSLDKRAVEMFAAAVEAHLATGGSALIATHIDLGLRDAQVLDVGPLRASPTALAGASDEAFL.

One can recognise an ABC transporter domain in the interval 3 to 206; that stretch reads VSVDDLCVTR…LAGASDEAFL (204 aa). 35–42 provides a ligand contact to ATP; that stretch reads GPNGSGKT.

The protein belongs to the ABC transporter superfamily. CcmA exporter (TC 3.A.1.107) family. In terms of assembly, the complex is composed of two ATP-binding proteins (CcmA) and two transmembrane proteins (CcmB).

The protein resides in the cell inner membrane. It catalyses the reaction heme b(in) + ATP + H2O = heme b(out) + ADP + phosphate + H(+). Part of the ABC transporter complex CcmAB involved in the biogenesis of c-type cytochromes; once thought to export heme, this seems not to be the case, but its exact role is uncertain. Responsible for energy coupling to the transport system. The sequence is that of Cytochrome c biogenesis ATP-binding export protein CcmA from Roseobacter denitrificans (strain ATCC 33942 / OCh 114) (Erythrobacter sp. (strain OCh 114)).